The primary structure comprises 497 residues: Protein FAM114A2 (497 aa).

The tract at residues 1 to 54 is disordered; that stretch reads MSDKDPPESPVVTGVASTLKDENCEPVEKPEDKSQPVVSTRKRPETKPSSDLEA. Over residues 19 to 34 the composition is skewed to basic and acidic residues; sequence LKDENCEPVEKPEDKS. A phosphoserine mark is found at Ser84 and Ser205. A disordered region spans residues 344–364; that stretch reads VAEKEEGEKESEAGNTEEAQK.

Belongs to the FAM114 family.

In Mus musculus (Mouse), this protein is Protein FAM114A2 (Fam114a2).